Reading from the N-terminus, the 248-residue chain is Coenzyme F420:L-glutamate ligase (248 aa).

Residues 15–18, 45–46, and K50 each bind GTP; these read IPLI and ET. Position 115 (D115) interacts with a divalent metal cation. N118 serves as a coordination point for GTP. Residues D155, S156, and Q213 each contribute to the a divalent metal cation site. 211–218 is a GTP binding site; it reads MGQSNEGI.

It belongs to the CofE family. In terms of assembly, homodimer. The cofactor is Mg(2+). Mn(2+) serves as cofactor. Requires K(+) as cofactor.

It catalyses the reaction oxidized coenzyme F420-0 + GTP + L-glutamate = oxidized coenzyme F420-1 + GDP + phosphate + H(+). The enzyme catalyses oxidized coenzyme F420-1 + GTP + L-glutamate = oxidized coenzyme F420-2 + GDP + phosphate + H(+). The protein operates within cofactor biosynthesis; coenzyme F420 biosynthesis. Functionally, catalyzes the GTP-dependent successive addition of two or more gamma-linked L-glutamates to the L-lactyl phosphodiester of 7,8-didemethyl-8-hydroxy-5-deazariboflavin (F420-0) to form coenzyme F420-0-glutamyl-glutamate (F420-2) or polyglutamated F420 derivatives. The chain is Coenzyme F420:L-glutamate ligase from Methanococcus maripaludis (strain C7 / ATCC BAA-1331).